The primary structure comprises 353 residues: T-complex protein 1 subunit eta (353 aa).

It belongs to the TCP-1 chaperonin family. In terms of assembly, heterooligomeric complex of about 850 to 900 kDa that forms two stacked rings, 12 to 16 nm in diameter.

The protein localises to the cytoplasm. Functionally, molecular chaperone; assists the folding of proteins upon ATP hydrolysis. Known to play a role, in vitro, in the folding of actin and tubulin. This is T-complex protein 1 subunit eta from Tetrahymena thermophila.